The primary structure comprises 160 residues: Single-stranded DNA-binding protein 3 (160 aa).

An SSB domain is found at 2-104; it reads MNRVVLVGRL…IVAESVQFLE (103 aa). Polar residues predominate over residues 106 to 133; sequence KQNGAGGSTSNNNQSETNYSNDNKTSSY. A disordered region spans residues 106-160; sequence KQNGAGGSTSNNNQSETNYSNDNKTSSYRADRSQNGDSFANEGAPVDINPDDLPF.

Homotetramer.

In Listeria innocua serovar 6a (strain ATCC BAA-680 / CLIP 11262), this protein is Single-stranded DNA-binding protein 3 (ssb3).